Here is a 368-residue protein sequence, read N- to C-terminus: Phospho-N-acetylmuramoyl-pentapeptide-transferase (368 aa).

The next 9 helical transmembrane spans lie at 30–50 (AAAI…IRYL), 72–92 (LPTM…FLWA), 98–118 (HVWL…IDDY), 139–159 (ISLG…AVLL), 170–190 (LSID…TAVS), 201–221 (GLAS…SYLA), 238–258 (GGEI…FLWF), 264–286 (EIIM…ALLI), and 345–365 (KIVI…LMTL).

It belongs to the glycosyltransferase 4 family. MraY subfamily. Mg(2+) serves as cofactor.

It is found in the cell inner membrane. It carries out the reaction UDP-N-acetyl-alpha-D-muramoyl-L-alanyl-gamma-D-glutamyl-meso-2,6-diaminopimeloyl-D-alanyl-D-alanine + di-trans,octa-cis-undecaprenyl phosphate = di-trans,octa-cis-undecaprenyl diphospho-N-acetyl-alpha-D-muramoyl-L-alanyl-D-glutamyl-meso-2,6-diaminopimeloyl-D-alanyl-D-alanine + UMP. It functions in the pathway cell wall biogenesis; peptidoglycan biosynthesis. In terms of biological role, catalyzes the initial step of the lipid cycle reactions in the biosynthesis of the cell wall peptidoglycan: transfers peptidoglycan precursor phospho-MurNAc-pentapeptide from UDP-MurNAc-pentapeptide onto the lipid carrier undecaprenyl phosphate, yielding undecaprenyl-pyrophosphoryl-MurNAc-pentapeptide, known as lipid I. This Chlorobium phaeobacteroides (strain DSM 266 / SMG 266 / 2430) protein is Phospho-N-acetylmuramoyl-pentapeptide-transferase.